Reading from the N-terminus, the 118-residue chain is LYR motif containing protein 1 (118 aa).

The disordered stretch occupies residues 91–118 (TQKGRKLRAQQRLRKQAKPVYLQSQDET). The span at 93–107 (KGRKLRAQQRLRKQA) shows a compositional bias: basic residues.

Belongs to the complex I LYR family.

The chain is LYR motif containing protein 1 (lyrm1) from Danio rerio (Zebrafish).